Here is a 578-residue protein sequence, read N- to C-terminus: Isocitrate dehydrogenase kinase/phosphatase (578 aa).

ATP is bound by residues 315 to 321 (APGIRGM) and lysine 336. Aspartate 371 is a catalytic residue.

The protein belongs to the AceK family.

The protein localises to the cytoplasm. It catalyses the reaction L-seryl-[isocitrate dehydrogenase] + ATP = O-phospho-L-seryl-[isocitrate dehydrogenase] + ADP + H(+). Functionally, bifunctional enzyme which can phosphorylate or dephosphorylate isocitrate dehydrogenase (IDH) on a specific serine residue. This is a regulatory mechanism which enables bacteria to bypass the Krebs cycle via the glyoxylate shunt in response to the source of carbon. When bacteria are grown on glucose, IDH is fully active and unphosphorylated, but when grown on acetate or ethanol, the activity of IDH declines drastically concomitant with its phosphorylation. This is Isocitrate dehydrogenase kinase/phosphatase from Escherichia coli O139:H28 (strain E24377A / ETEC).